A 377-amino-acid chain; its full sequence is Pseudouridylate synthase RPUSD4, mitochondrial (377 aa).

The transit peptide at 1 to 35 (MAAPLLGSPGLQVLSMSSRTGKLFTPSSRSFCSRA) directs the protein to the mitochondrion. Residue Asp-153 is part of the active site.

The protein belongs to the pseudouridine synthase RluA family. In terms of assembly, interacts with 16S mt-rRNA, mt-tRNA(Phe) and mt-tRNA(Met). Forms a regulatory protein-RNA complex, consisting of RCC1L, NGRN, RPUSD3, RPUSD4, TRUB2, FASTKD2 and 16S mt-rRNA.

The protein resides in the mitochondrion matrix. It is found in the nucleus. It localises to the cytoplasm. It carries out the reaction uridine in 5S rRNA = pseudouridine in 5S rRNA. The enzyme catalyses a uridine in tRNA = a pseudouridine in tRNA. The catalysed reaction is a uridine in mRNA = a pseudouridine in mRNA. Its function is as follows. Catalyzes uridine to pseudouridine isomerization (pseudouridylation) of different mitochondrial RNA substrates. Acts on position 1397 in 16S mitochondrial ribosomal RNA (16S mt-rRNA). This modification is required for the assembly of 16S mt-rRNA into a functional mitochondrial ribosome. As a component of a functional protein-RNA module, consisting of RCC1L, NGRN, RPUSD3, RPUSD4, TRUB2, FASTKD2 and 16S mt-rRNA, controls 16S mt-rRNA abundance and is required for intra-mitochondrial translation. Acts on position 39 in mitochondrial tRNA(Phe). Also catalyzes pseudouridylation of mRNAs in nucleus: acts as a regulator of pre-mRNA splicing by mediating pseudouridylation of pre-mRNAs at locations associated with alternatively spliced regions. Pseudouridylation of pre-mRNAs near splice sites directly regulates mRNA splicing and mRNA 3'-end processing. The polypeptide is Pseudouridylate synthase RPUSD4, mitochondrial (Rattus norvegicus (Rat)).